The chain runs to 370 residues: MDERMMTSAKRPEDRETEWSLRPRTLREYIGQDKLKENLTVFIQAALGRREPLDHVLLYGPPGLGKTTLAQIIAQELGVQLRVTSGPAIERPGDLAAILTNLQPMDVLFIDEIHRLNRAVEEVLYPAMEDFCLDIVIGKGPAARSIRIDLPRFTLVGATTRAGMLTSPLRDRFGVIHRLEYYRPDELEFIILRAATILGVTAEPEGAREIALRSRGTPRIANRLLKRVRDYAQVLSDGVVTGEVAREALRRLEVDPRGLDTTDQRLLEALIRKFAGGPVGVETLAASVGESVDTVEDVVEPYLMQLGFLNRTPRGRMATIAACAHLGVPVPAGLLALQEGRPALLPSATDDTSSTAVGAAAEQAALSFDE.

The segment at 1 to 182 (MDERMMTSAK…FGVIHRLEYY (182 aa)) is large ATPase domain (RuvB-L). Residues leucine 21, arginine 22, glycine 63, lysine 66, threonine 67, threonine 68, 129-131 (EDF), arginine 172, tyrosine 182, and arginine 219 each bind ATP. Residue threonine 67 coordinates Mg(2+). A small ATPAse domain (RuvB-S) region spans residues 183–253 (RPDELEFIIL…VAREALRRLE (71 aa)). The tract at residues 256-370 (PRGLDTTDQR…AEQAALSFDE (115 aa)) is head domain (RuvB-H). Residues arginine 311 and arginine 316 each contribute to the DNA site.

Belongs to the RuvB family. As to quaternary structure, homohexamer. Forms an RuvA(8)-RuvB(12)-Holliday junction (HJ) complex. HJ DNA is sandwiched between 2 RuvA tetramers; dsDNA enters through RuvA and exits via RuvB. An RuvB hexamer assembles on each DNA strand where it exits the tetramer. Each RuvB hexamer is contacted by two RuvA subunits (via domain III) on 2 adjacent RuvB subunits; this complex drives branch migration. In the full resolvosome a probable DNA-RuvA(4)-RuvB(12)-RuvC(2) complex forms which resolves the HJ.

The protein localises to the cytoplasm. It catalyses the reaction ATP + H2O = ADP + phosphate + H(+). Functionally, the RuvA-RuvB-RuvC complex processes Holliday junction (HJ) DNA during genetic recombination and DNA repair, while the RuvA-RuvB complex plays an important role in the rescue of blocked DNA replication forks via replication fork reversal (RFR). RuvA specifically binds to HJ cruciform DNA, conferring on it an open structure. The RuvB hexamer acts as an ATP-dependent pump, pulling dsDNA into and through the RuvAB complex. RuvB forms 2 homohexamers on either side of HJ DNA bound by 1 or 2 RuvA tetramers; 4 subunits per hexamer contact DNA at a time. Coordinated motions by a converter formed by DNA-disengaged RuvB subunits stimulates ATP hydrolysis and nucleotide exchange. Immobilization of the converter enables RuvB to convert the ATP-contained energy into a lever motion, pulling 2 nucleotides of DNA out of the RuvA tetramer per ATP hydrolyzed, thus driving DNA branch migration. The RuvB motors rotate together with the DNA substrate, which together with the progressing nucleotide cycle form the mechanistic basis for DNA recombination by continuous HJ branch migration. Branch migration allows RuvC to scan DNA until it finds its consensus sequence, where it cleaves and resolves cruciform DNA. The polypeptide is Holliday junction branch migration complex subunit RuvB (Heliobacterium modesticaldum (strain ATCC 51547 / Ice1)).